The primary structure comprises 1411 residues: Early endosome antigen 1 (1411 aa).

The segment at Met1–Ile27 is disordered. Residues Ser15–Ile27 show a composition bias toward polar residues. The C2H2-type zinc-finger motif lies at Phe41 to His64. Phosphoserine is present on residues Ser52 and Ser70. Residues Leu78 to Lys1348 adopt a coiled-coil conformation. 2 disordered regions span residues Ser476 to Thr501 and Glu1189 to Lys1217. The span at His481–His490 shows a compositional bias: basic and acidic residues. Positions Gln491–Ala500 are enriched in low complexity. The segment at Asp1352–Gln1410 adopts an FYVE-type zinc-finger fold. Residues Cys1358, Cys1361, Cys1374, Cys1377, Cys1382, Cys1385, Cys1402, and Cys1405 each contribute to the Zn(2+) site.

Homodimer. Binds STX6. Binds RAB5A, RAB5B, RAB5C and RAB22A that have been activated by GTP-binding. Interacts with ERBB2. Interacts with RAB31. Interacts with SAMD9 and SAMD9L. May interact with PLEKHF2.

It is found in the cytoplasm. The protein resides in the early endosome membrane. In terms of biological role, binds phospholipid vesicles containing phosphatidylinositol 3-phosphate and participates in endosomal trafficking. The protein is Early endosome antigen 1 (Eea1) of Mus musculus (Mouse).